The sequence spans 215 residues: Thiamine-phosphate synthase (215 aa).

4-amino-2-methyl-5-(diphosphooxymethyl)pyrimidine contacts are provided by residues 43-47 (QFRDK) and asparagine 78. Mg(2+) contacts are provided by aspartate 79 and aspartate 98. Serine 117 is a 4-amino-2-methyl-5-(diphosphooxymethyl)pyrimidine binding site. 143 to 145 (TNS) is a 2-[(2R,5Z)-2-carboxy-4-methylthiazol-5(2H)-ylidene]ethyl phosphate binding site. Residue lysine 146 participates in 4-amino-2-methyl-5-(diphosphooxymethyl)pyrimidine binding. Residues glycine 174 and 194-195 (IS) each bind 2-[(2R,5Z)-2-carboxy-4-methylthiazol-5(2H)-ylidene]ethyl phosphate.

It belongs to the thiamine-phosphate synthase family. It depends on Mg(2+) as a cofactor.

It catalyses the reaction 2-[(2R,5Z)-2-carboxy-4-methylthiazol-5(2H)-ylidene]ethyl phosphate + 4-amino-2-methyl-5-(diphosphooxymethyl)pyrimidine + 2 H(+) = thiamine phosphate + CO2 + diphosphate. The catalysed reaction is 2-(2-carboxy-4-methylthiazol-5-yl)ethyl phosphate + 4-amino-2-methyl-5-(diphosphooxymethyl)pyrimidine + 2 H(+) = thiamine phosphate + CO2 + diphosphate. It carries out the reaction 4-methyl-5-(2-phosphooxyethyl)-thiazole + 4-amino-2-methyl-5-(diphosphooxymethyl)pyrimidine + H(+) = thiamine phosphate + diphosphate. Its pathway is cofactor biosynthesis; thiamine diphosphate biosynthesis; thiamine phosphate from 4-amino-2-methyl-5-diphosphomethylpyrimidine and 4-methyl-5-(2-phosphoethyl)-thiazole: step 1/1. In terms of biological role, condenses 4-methyl-5-(beta-hydroxyethyl)thiazole monophosphate (THZ-P) and 2-methyl-4-amino-5-hydroxymethyl pyrimidine pyrophosphate (HMP-PP) to form thiamine monophosphate (TMP). This Lactococcus lactis subsp. lactis (strain IL1403) (Streptococcus lactis) protein is Thiamine-phosphate synthase.